The chain runs to 438 residues: Glutamyl-tRNA(Gln) amidotransferase subunit D (438 aa).

The Asparaginase/glutaminase domain occupies 92 to 422 (PTITILGTGG…REAKKMMLTN (331 aa)). Residues threonine 102, threonine 178, aspartate 179, and lysine 256 contribute to the active site.

Belongs to the asparaginase 1 family. GatD subfamily. As to quaternary structure, heterodimer of GatD and GatE.

It catalyses the reaction L-glutamyl-tRNA(Gln) + L-glutamine + ATP + H2O = L-glutaminyl-tRNA(Gln) + L-glutamate + ADP + phosphate + H(+). In terms of biological role, allows the formation of correctly charged Gln-tRNA(Gln) through the transamidation of misacylated Glu-tRNA(Gln) in organisms which lack glutaminyl-tRNA synthetase. The reaction takes place in the presence of glutamine and ATP through an activated gamma-phospho-Glu-tRNA(Gln). The GatDE system is specific for glutamate and does not act on aspartate. This chain is Glutamyl-tRNA(Gln) amidotransferase subunit D, found in Pyrococcus furiosus (strain ATCC 43587 / DSM 3638 / JCM 8422 / Vc1).